We begin with the raw amino-acid sequence, 788 residues long: Patatin-like phospholipase domain-containing protein DEHA2B04136g (788 aa).

A helical membrane pass occupies residues 136–156 (WPILIFISCWISLLCFMYIIV). In terms of domain architecture, PNPLA spans 311-503 (LCLSGGACFT…RTDIPIDALN (193 aa)). The GXSXG signature appears at 342–346 (GTSGG). The active-site Nucleophile is serine 344. Aspartate 490 serves as the catalytic Proton acceptor. Positions 662–672 (ANFNTLTSSDS) are enriched in polar residues. Positions 662–771 (ANFNTLTSSD…DTGSRFLKSF (110 aa)) are disordered. Composition is skewed to acidic residues over residues 690-705 (MFDDDEYDSDSSDDEV) and 723-749 (EDGDDDEDAYEYYDDDDYGLSTEDEAN).

It belongs to the PLPL family.

Its subcellular location is the membrane. In terms of biological role, probable lipid hydrolase. This chain is Patatin-like phospholipase domain-containing protein DEHA2B04136g, found in Debaryomyces hansenii (strain ATCC 36239 / CBS 767 / BCRC 21394 / JCM 1990 / NBRC 0083 / IGC 2968) (Yeast).